Reading from the N-terminus, the 511-residue chain is Cytochrome P450 93B2 (511 aa).

A helical membrane pass occupies residues Leu-4–Tyr-24. Residue Cys-447 participates in heme binding.

This sequence belongs to the cytochrome P450 family. It depends on heme as a cofactor.

It is found in the membrane. The enzyme catalyses a flavanone + reduced [NADPH--hemoprotein reductase] + O2 = a flavone + oxidized [NADPH--hemoprotein reductase] + 2 H2O + H(+). Its pathway is secondary metabolite biosynthesis; flavonoid biosynthesis. Functionally, functions as a flavone synthase II (FNSII) that catalyzes the direct conversion of flavanones to flavones. In vitro, can convert liquiritigenin, naringenin and eriodictyol to 7,4'-dihydroxyflavone, apigenin and luteolin, respectively. The chain is Cytochrome P450 93B2 from Gerbera hybrida (Daisy).